Consider the following 60-residue polypeptide: Large ribosomal subunit protein bL32 (60 aa).

Residues 1-25 (MAVQQNKKSPSKRGMHRSHNALNVP) form a disordered region. A compositionally biased stretch (basic residues) spans 9-19 (SPSKRGMHRSH).

This sequence belongs to the bacterial ribosomal protein bL32 family.

The protein is Large ribosomal subunit protein bL32 of Polaromonas naphthalenivorans (strain CJ2).